A 533-amino-acid chain; its full sequence is Retinoid isomerohydrolase (533 aa).

N-acetylserine is present on Ser2. Residues Thr101 and Thr105 each carry the phosphothreonine modification. A lipid anchor (S-palmitoyl cysteine; in membrane form) is attached at Cys112. Lys113 is modified (N6-acetyllysine). A Phosphoserine modification is found at Ser117. His180 is a binding site for Fe cation. Cys231 carries S-palmitoyl cysteine; in membrane form lipidation. Fe cation-binding residues include His241 and His313. Residues Cys329 and Cys330 are each lipidated (S-palmitoyl cysteine; in membrane form). Fe cation is bound at residue His527.

This sequence belongs to the carotenoid oxygenase family. In terms of assembly, interacts with MYO7A; this mediates light-dependent intracellular transport of RPE65. Requires Fe(2+) as cofactor. Palmitoylation by LRAT regulates ligand binding specificity; the palmitoylated form (membrane form) specifically binds all-trans-retinyl-palmitate, while the soluble unpalmitoylated form binds all-trans-retinol (vitamin A). As to expression, retinal pigment epithelium specific.

The protein localises to the cytoplasm. It localises to the cell membrane. Its subcellular location is the microsome membrane. The catalysed reaction is an all-trans-retinyl ester + H2O = 11-cis-retinol + a fatty acid + H(+). It catalyses the reaction lutein = (3R,3'S)-zeaxanthin. It carries out the reaction all-trans-retinyl hexadecanoate + H2O = 11-cis-retinol + hexadecanoate + H(+). Functionally, critical isomerohydrolase in the retinoid cycle involved in regeneration of 11-cis-retinal, the chromophore of rod and cone opsins. Catalyzes the cleavage and isomerization of all-trans-retinyl fatty acid esters to 11-cis-retinol which is further oxidized by 11-cis retinol dehydrogenase to 11-cis-retinal for use as visual chromophore. Essential for the production of 11-cis retinal for both rod and cone photoreceptors. Also capable of catalyzing the isomerization of lutein to meso-zeaxanthin an eye-specific carotenoid. The soluble form binds vitamin A (all-trans-retinol), making it available for LRAT processing to all-trans-retinyl ester. The membrane form, palmitoylated by LRAT, binds all-trans-retinyl esters, making them available for IMH (isomerohydrolase) processing to all-cis-retinol. The soluble form is regenerated by transferring its palmitoyl groups onto 11-cis-retinol, a reaction catalyzed by LRAT. The sequence is that of Retinoid isomerohydrolase (RPE65) from Canis lupus familiaris (Dog).